A 226-amino-acid polypeptide reads, in one-letter code: N-(5'-phosphoribosyl)anthranilate isomerase 2 (226 aa).

This sequence belongs to the TrpF family.

It catalyses the reaction N-(5-phospho-beta-D-ribosyl)anthranilate = 1-(2-carboxyphenylamino)-1-deoxy-D-ribulose 5-phosphate. It participates in amino-acid biosynthesis; L-tryptophan biosynthesis; L-tryptophan from chorismate: step 3/5. This chain is N-(5'-phosphoribosyl)anthranilate isomerase 2 (trpF2), found in Methanosarcina mazei (strain ATCC BAA-159 / DSM 3647 / Goe1 / Go1 / JCM 11833 / OCM 88) (Methanosarcina frisia).